Here is a 558-residue protein sequence, read N- to C-terminus: DNA ligase B (558 aa).

Lys126 acts as the N6-AMP-lysine intermediate in catalysis.

This sequence belongs to the NAD-dependent DNA ligase family. LigB subfamily.

It catalyses the reaction NAD(+) + (deoxyribonucleotide)n-3'-hydroxyl + 5'-phospho-(deoxyribonucleotide)m = (deoxyribonucleotide)n+m + AMP + beta-nicotinamide D-nucleotide.. Functionally, catalyzes the formation of phosphodiester linkages between 5'-phosphoryl and 3'-hydroxyl groups in double-stranded DNA using NAD as a coenzyme and as the energy source for the reaction. The protein is DNA ligase B of Pseudomonas fluorescens (strain Pf0-1).